The following is a 106-amino-acid chain: Ig kappa-b4 chain C region (106 aa).

An Ig-like domain is found at proline 6 to glutamine 99. Cysteine 27 and cysteine 87 are disulfide-bonded. Positions glutamine 48 to asparagine 64 are enriched in polar residues. The segment at glutamine 48–serine 67 is disordered.

The polypeptide is Ig kappa-b4 chain C region (K-BAS) (Oryctolagus cuniculus (Rabbit)).